The sequence spans 396 residues: uncharacterized protein (396 aa).

Helical transmembrane passes span 8–28 (TASG…ILAS), 44–64 (ISYV…ISGV), 73–93 (PLVV…PLSP), 97–117 (LAFV…AGTY), 133–153 (VLVK…ITFL), 158–178 (MFYG…IIYL), 213–233 (ALII…IWLP), 250–270 (LLSY…VLLN), 276–296 (VFIT…MLTV), 304–324 (ITAF…ITLM), 338–358 (IVAT…GLIA), and 363–383 (IAHI…AAAF).

It belongs to the major facilitator superfamily.

It localises to the cell membrane. This is an uncharacterized protein from Bacillus subtilis (strain 168).